The primary structure comprises 633 residues: UvrABC system protein C (633 aa).

In terms of domain architecture, GIY-YIG spans 21-100 (TDPGVYKFLD…IKELQPRYNV (80 aa)). The 36-residue stretch at 214–249 (QELMDLLKDEMQRQSDAHNFEEAARLRDQVKALKDY) folds into the UVR domain.

This sequence belongs to the UvrC family. In terms of assembly, interacts with UvrB in an incision complex.

Its subcellular location is the cytoplasm. Its function is as follows. The UvrABC repair system catalyzes the recognition and processing of DNA lesions. UvrC both incises the 5' and 3' sides of the lesion. The N-terminal half is responsible for the 3' incision and the C-terminal half is responsible for the 5' incision. The polypeptide is UvrABC system protein C (Salinibacter ruber (strain DSM 13855 / M31)).